The sequence spans 782 residues: Protein bicaudal D (782 aa).

Residues Val-15–Ala-77 adopt a coiled-coil conformation. Ser-103 carries the post-translational modification Phosphoserine. Residues Glu-107–Ala-249 adopt a coiled-coil conformation. Ser-285, Ser-288, and Ser-305 each carry phosphoserine. Thr-306 carries the post-translational modification Phosphothreonine. Ser-310 carries the phosphoserine modification. Coiled coils occupy residues Ser-320–Arg-368 and Thr-444–His-477. At Ser-528 the chain carries Phosphoserine. Coiled coils occupy residues Glu-603–Gln-630 and Cys-695–Asp-743. Residues Val-699–Leu-722 form an interaction with Rab6 region. The disordered stretch occupies residues Arg-744–Phe-782. Residues Arg-757–Thr-767 are compositionally biased toward polar residues. Residues Arg-768–Phe-782 are compositionally biased toward low complexity.

The protein belongs to the BicD family. May homodimerize but does not interact with BicDR. Interacts (via C-terminal domain) with Rab6. As to expression, in ovaries, expressed in oocyte and nurse cells.

It localises to the cytoplasm. The protein resides in the cytoskeleton. In terms of biological role, this protein is essential for differentiation. It may play a role in localizing of Nanos (a maternal determinant) activity in oocytes. Functions redundantly with BicDR. During oogenesis, plays a specific role, together with Rab6 but independently of Sec5, in the polarization of the oocyte microtubule cytoskeleton, in oskar mRNA localization and in the anterodorsal secretion of grk. Plays a role in the biogenesis of annulate lamellae containing nuclear pore complex components. During macrochaetae development, together with BicDR, involved in Rab 6 and Spn-F stability and distribution and actin cytoskeleton organization. This Drosophila melanogaster (Fruit fly) protein is Protein bicaudal D.